The primary structure comprises 493 residues: Glutamyl-tRNA(Gln) amidotransferase subunit A (493 aa).

Active-site charge relay system residues include Lys-78 and Ser-159. Catalysis depends on Ser-183, which acts as the Acyl-ester intermediate.

The protein belongs to the amidase family. GatA subfamily. As to quaternary structure, heterotrimer of A, B and C subunits.

It carries out the reaction L-glutamyl-tRNA(Gln) + L-glutamine + ATP + H2O = L-glutaminyl-tRNA(Gln) + L-glutamate + ADP + phosphate + H(+). Its function is as follows. Allows the formation of correctly charged Gln-tRNA(Gln) through the transamidation of misacylated Glu-tRNA(Gln) in organisms which lack glutaminyl-tRNA synthetase. The reaction takes place in the presence of glutamine and ATP through an activated gamma-phospho-Glu-tRNA(Gln). This chain is Glutamyl-tRNA(Gln) amidotransferase subunit A, found in Sphingopyxis alaskensis (strain DSM 13593 / LMG 18877 / RB2256) (Sphingomonas alaskensis).